The primary structure comprises 294 residues: Bifunctional protein FolD (294 aa).

NADP(+) contacts are provided by residues 166–168 (GRS), serine 191, and isoleucine 232.

It belongs to the tetrahydrofolate dehydrogenase/cyclohydrolase family. In terms of assembly, homodimer.

It carries out the reaction (6R)-5,10-methylene-5,6,7,8-tetrahydrofolate + NADP(+) = (6R)-5,10-methenyltetrahydrofolate + NADPH. The catalysed reaction is (6R)-5,10-methenyltetrahydrofolate + H2O = (6R)-10-formyltetrahydrofolate + H(+). It participates in one-carbon metabolism; tetrahydrofolate interconversion. Its function is as follows. Catalyzes the oxidation of 5,10-methylenetetrahydrofolate to 5,10-methenyltetrahydrofolate and then the hydrolysis of 5,10-methenyltetrahydrofolate to 10-formyltetrahydrofolate. This Nitrobacter hamburgensis (strain DSM 10229 / NCIMB 13809 / X14) protein is Bifunctional protein FolD.